A 315-amino-acid chain; its full sequence is Cytochrome c biogenesis protein CcsA (315 aa).

The next 8 membrane-spanning stretches (helical) occupy residues 15–35 (SCFLILFLTTVYYWLKIGFGG), 39–59 (FSFTGLTGYGSALCCLTLQLI), 73–93 (LYESLIFLAWCLLLLYIYIEV), 97–117 (TLFLGVLTSPAILCLVAFTDF), 144–164 (VMIASYAALLLGCFIAIAYLV), 222–242 (TIGIGFCFLTLGILSGAIWAN), 257–277 (WAFITWLTFACYLHSRLVGGW), and 283–303 (ALVASFGFLVVWVCYLGVNLL).

The protein belongs to the CcmF/CycK/Ccl1/NrfE/CcsA family. In terms of assembly, may interact with Ccs1.

The protein resides in the plastid. It is found in the chloroplast thylakoid membrane. Required during biogenesis of c-type cytochromes (cytochrome c6 and cytochrome f) at the step of heme attachment. The protein is Cytochrome c biogenesis protein CcsA of Chlorella vulgaris (Green alga).